Reading from the N-terminus, the 616-residue chain is Chaperone protein HscA (616 aa).

This sequence belongs to the heat shock protein 70 family.

Chaperone involved in the maturation of iron-sulfur cluster-containing proteins. Has a low intrinsic ATPase activity which is markedly stimulated by HscB. Involved in the maturation of IscU. The protein is Chaperone protein HscA of Escherichia coli O45:K1 (strain S88 / ExPEC).